The primary structure comprises 3391 residues: Genome polyprotein (3391 aa).

The segment at Met1–Met15 is interaction with host EXOC1. Topologically, residues Met1–Ser101 are cytoplasmic. Residues Met37 to Ile72 form a hydrophobic; homodimerization of capsid protein C region. Residues Ser101–Ala114 constitute a propeptide, ER anchor for the capsid protein C, removed in mature form by serine protease NS3. The helical transmembrane segment at Ala102–Gly122 threads the bilayer. At Glu123–Glu238 the chain is on the extracellular side. Asn183 is a glycosylation site (N-linked (GlcNAc...) asparagine; by host). The helical transmembrane segment at Thr239–Gly259 threads the bilayer. Residues Thr260–Arg265 are Cytoplasmic-facing. Residues Ala266–Thr280 form a helical membrane-spanning segment. Residues Met281 to Gly725 lie on the Extracellular side of the membrane. 4 disulfides stabilise this stretch: Cys283-Cys310, Cys340-Cys401, Cys354-Cys385, and Cys372-Cys396. Asn347 carries N-linked (GlcNAc...) asparagine; by host glycosylation. The segment at Asp378–Gly391 is fusion peptide. N-linked (GlcNAc...) asparagine; by host glycosylation occurs at Asn433. Intrachain disulfides connect Cys465–Cys565 and Cys582–Cys613. The chain crosses the membrane as a helical span at residues Ala726–Ile746. At Gly747–Ser752 the chain is on the cytoplasmic side. Residues Thr753–Val773 traverse the membrane as a helical segment. Topologically, residues Gln774 to Ile1195 are extracellular. Disulfide bonds link Cys779–Cys790, Cys830–Cys918, Cys954–Cys998, Cys1055–Cys1104, Cys1066–Cys1088, and Cys1087–Cys1091. N-linked (GlcNAc...) asparagine; by host glycans are attached at residues Asn905 and Asn982. Asn1134 carries an N-linked (GlcNAc...) asparagine; by host glycan. Residues Gly1196 to Leu1220 traverse the membrane as a helical segment. The Cytoplasmic segment spans residues Arg1221–Lys1226. A helical transmembrane segment spans residues Glu1227–Glu1245. Over Thr1246–Lys1269 the chain is Lumenal. A helical transmembrane segment spans residues Tyr1270–Asn1290. Position 1291 (Ala1291) is a topological domain, cytoplasmic. The helical transmembrane segment at Trp1292–Thr1310 threads the bilayer. Over Ser1311 to Asp1317 the chain is Lumenal. The helical transmembrane segment at Trp1318–Leu1338 threads the bilayer. The Cytoplasmic portion of the chain corresponds to Ser1339–Ser1346. Residues Trp1347–Leu1367 form a helical membrane-spanning segment. Residues Lys1368–Asp1370 lie on the Lumenal side of the membrane. A helical transmembrane segment spans residues Ile1371–Gly1391. The Cytoplasmic segment spans residues Arg1392–Gly1447. Positions Leu1398 to Glu1437 are interacts with and activates NS3 protease. Positions Leu1448–Leu1468 form an intramembrane region, helical. The Cytoplasmic portion of the chain corresponds to Trp1469–Thr2147. The 178-residue stretch at Ala1476–Ile1653 folds into the Peptidase S7 domain. Residues His1526, Asp1550, and Ser1610 each act as charge relay system; for serine protease NS3 activity in the active site. In terms of domain architecture, Helicase ATP-binding spans Asp1655–Glu1811. The tract at residues Arg1659–Arg1662 is important for RNA-binding. Leu1668–Thr1675 is an ATP binding site. A DEAH box motif is present at residues Asp1759 to His1762. The 168-residue stretch at Ser1821–Arg1988 folds into the Helicase C-terminal domain. Lys1863 carries the post-translational modification N6-acetyllysine; by host. Residues Leu2148–Gly2168 form a helical membrane-spanning segment. The Lumenal portion of the chain corresponds to Arg2169–Gly2170. An intramembrane region (helical) is located at residues Ile2171–Ala2191. Gln2192 is a topological domain (lumenal). Residues Ile2193–Ile2213 form a helical membrane-spanning segment. Over Pro2214–Thr2228 the chain is Cytoplasmic. Residues Tyr2229–Leu2249 traverse the membrane as a helical segment. Residues Glu2250–Asp2274 lie on the Lumenal side of the membrane. The segment at residues Leu2275 to Leu2295 is an intramembrane region (helical). Over Arg2296–Thr2316 the chain is Lumenal. N-linked (GlcNAc...) asparagine; by host glycosylation is found at Asn2301 and Asn2305. The helical intramembrane region spans Val2317–Leu2337. At Ala2338 to Pro2347 the chain is on the lumenal side. Residues Ile2348–Leu2368 traverse the membrane as a helical segment. At Gln2369–Gln2413 the chain is on the cytoplasmic side. The helical transmembrane segment at Val2414–Cys2434 threads the bilayer. Topologically, residues Glu2435–Thr2459 are lumenal. The N-linked (GlcNAc...) asparagine; by host glycan is linked to Asn2457. Residues Ile2460–Phe2480 form a helical membrane-spanning segment. Residues Ser2481–Trp3391 are Cytoplasmic-facing. Positions Thr2493–Asn2755 constitute an mRNA cap 0-1 NS5-type MT domain. Ser2547 is a binding site for S-adenosyl-L-methionine. Ser2547 is subject to Phosphoserine. The active-site For 2'-O-MTase activity is the Lys2552. An SUMO-interacting motif motif is present at residues Val2568–Leu2571. Positions 2577, 2578, 2595, 2596, 2622, and 2623 each coordinate S-adenosyl-L-methionine. Catalysis depends on Asp2637, which acts as the For 2'-O-MTase activity. S-adenosyl-L-methionine is bound at residue Ile2638. Catalysis depends on for 2'-O-MTase activity residues Lys2672 and Glu2708. Tyr2710 is a binding site for S-adenosyl-L-methionine. Zn(2+) contacts are provided by Glu2929, His2933, Cys2938, and Cys2941. The 150-residue stretch at Ala3020–Leu3169 folds into the RdRp catalytic domain. Zn(2+) is bound by residues His3203, Cys3219, and Cys3338.

This sequence in the N-terminal section; belongs to the class I-like SAM-binding methyltransferase superfamily. mRNA cap 0-1 NS5-type methyltransferase family. In terms of assembly, homodimer. Interacts (via N-terminus) with host EXOC1 (via C-terminus); this interaction results in EXOC1 degradation through the proteasome degradation pathway. Forms heterodimers with envelope protein E in the endoplasmic reticulum and Golgi. As to quaternary structure, homodimer; in the endoplasmic reticulum and Golgi. Interacts with protein prM. Interacts with non-structural protein 1. In terms of assembly, homodimer; Homohexamer when secreted. Interacts with envelope protein E. Interacts with host PRKAA1. Interacts (via N-terminus) with serine protease NS3. As to quaternary structure, forms a heterodimer with serine protease NS3. May form homooligomers. In terms of assembly, forms a heterodimer with NS2B. Interacts with NS4B. Interacts with unphosphorylated RNA-directed RNA polymerase NS5; this interaction stimulates RNA-directed RNA polymerase NS5 guanylyltransferase activity. Interacts with host SHFL. Interacts with host MAVS; this interaction inhibits the synthesis of IFN-beta. Interacts with host SHFL. Interacts with host AUP1; the interaction occurs in the presence of Dengue virus NS4B and induces lipophagy which facilitates production of virus progeny particles. May interact with host SRPRA and SEC61G. As to quaternary structure, interacts with serine protease NS3. In terms of assembly, homodimer. Interacts with host STAT2; this interaction inhibits the phosphorylation of the latter, and, when all viral proteins are present (polyprotein), targets STAT2 for degradation. Interacts with serine protease NS3. Interacts with host PAF1 complex; the interaction may prevent the recruitment of the PAF1 complex to interferon-responsive genes, and thus reduces the immune response. Specific enzymatic cleavages in vivo yield mature proteins. Cleavages in the lumen of endoplasmic reticulum are performed by host signal peptidase, whereas cleavages in the cytoplasmic side are performed by serine protease NS3. Signal cleavage at the 2K-4B site requires a prior NS3 protease-mediated cleavage at the 4A-2K site. In terms of processing, cleaved in post-Golgi vesicles by a host furin, releasing the mature small envelope protein M, and peptide pr. This cleavage is incomplete as up to 30% of viral particles still carry uncleaved prM. Post-translationally, N-glycosylated. N-glycosylated. The excreted form is glycosylated and this is required for efficient secretion of the protein from infected cells. In terms of processing, acetylated by host KAT5. Acetylation modulates NS3 RNA-binding and unwinding activities and plays an important positive role for viral replication. Post-translationally, phosphorylated on serines residues. This phosphorylation may trigger NS5 nuclear localization. Sumoylation of RNA-directed RNA polymerase NS5 increases NS5 protein stability allowing proper viral RNA replication.

It localises to the virion. The protein resides in the host nucleus. The protein localises to the host cytoplasm. Its subcellular location is the host perinuclear region. It is found in the secreted. It localises to the virion membrane. The protein resides in the host endoplasmic reticulum membrane. The protein localises to the host mitochondrion. It catalyses the reaction Selective hydrolysis of -Xaa-Xaa-|-Yaa- bonds in which each of the Xaa can be either Arg or Lys and Yaa can be either Ser or Ala.. The catalysed reaction is RNA(n) + a ribonucleoside 5'-triphosphate = RNA(n+1) + diphosphate. It carries out the reaction a ribonucleoside 5'-triphosphate + H2O = a ribonucleoside 5'-diphosphate + phosphate + H(+). The enzyme catalyses ATP + H2O = ADP + phosphate + H(+). It catalyses the reaction a 5'-end (5'-triphosphoguanosine)-ribonucleoside in mRNA + S-adenosyl-L-methionine = a 5'-end (N(7)-methyl 5'-triphosphoguanosine)-ribonucleoside in mRNA + S-adenosyl-L-homocysteine. The catalysed reaction is a 5'-end (N(7)-methyl 5'-triphosphoguanosine)-ribonucleoside in mRNA + S-adenosyl-L-methionine = a 5'-end (N(7)-methyl 5'-triphosphoguanosine)-(2'-O-methyl-ribonucleoside) in mRNA + S-adenosyl-L-homocysteine + H(+). In terms of biological role, plays a role in virus budding by binding to the cell membrane and gathering the viral RNA into a nucleocapsid that forms the core of a mature virus particle. During virus entry, may induce genome penetration into the host cytoplasm after hemifusion induced by the surface proteins. Can migrate to the cell nucleus where it modulates host functions. Overcomes the anti-viral effects of host EXOC1 by sequestering and degrading the latter through the proteasome degradation pathway. Inhibits RNA silencing by interfering with host Dicer. Functionally, prevents premature fusion activity of envelope proteins in trans-Golgi by binding to envelope protein E at pH6.0. After virion release in extracellular space, gets dissociated from E dimers. Its function is as follows. Acts as a chaperone for envelope protein E during intracellular virion assembly by masking and inactivating envelope protein E fusion peptide. prM is the only viral peptide matured by host furin in the trans-Golgi network probably to avoid catastrophic activation of the viral fusion activity in acidic Golgi compartment prior to virion release. prM-E cleavage is inefficient, and many virions are only partially matured. These uncleaved prM would play a role in immune evasion. In terms of biological role, may play a role in virus budding. Exerts cytotoxic effects by activating a mitochondrial apoptotic pathway through M ectodomain. May display a viroporin activity. Binds to host cell surface receptor and mediates fusion between viral and cellular membranes. Envelope protein is synthesized in the endoplasmic reticulum in the form of heterodimer with protein prM. They play a role in virion budding in the ER, and the newly formed immature particle is covered with 60 spikes composed of heterodimer between precursor prM and envelope protein E. The virion is transported to the Golgi apparatus where the low pH causes dissociation of PrM-E heterodimers and formation of E homodimers. prM-E cleavage is inefficient, and many virions are only partially matured. These uncleaved prM would play a role in immune evasion. Functionally, involved in immune evasion, pathogenesis and viral replication. Once cleaved off the polyprotein, is targeted to three destinations: the viral replication cycle, the plasma membrane and the extracellular compartment. Essential for viral replication. Required for formation of the replication complex and recruitment of other non-structural proteins to the ER-derived membrane structures. Excreted as a hexameric lipoparticle that plays a role against host immune response. Antagonizing the complement function. Binds to the host macrophages and dendritic cells. Inhibits signal transduction originating from Toll-like receptor 3 (TLR3). Mediates complement activation, which may contribute to the pathogenesis of the vascular leakage that occurs in severe dengue disease. Activates autophagy through the AMPK/ERK/mTOR signaling pathway. Mechanistically, acts as the assembly platform for STK11-AMPK interactions and promotes STK11-AMPK interactions. In turn, promotes phosphorylation of the AMPK kinase structural domain and activates AMPK, thereby positively regulating the AMPK/ERK/mTOR signaling pathway and inducing autophagy. Its function is as follows. Disrupts the host endothelial glycocalyx layer of host pulmonary microvascular endothelial cells, inducing degradation of sialic acid and shedding of heparan sulfate proteoglycans. NS1 induces expression of sialidases, heparanase, and activates cathepsin L, which activates heparanase via enzymatic cleavage. These effects are probably linked to the endothelial hyperpermeability observed in severe dengue disease. In terms of biological role, component of the viral RNA replication complex that functions in virion assembly and antagonizes the host immune response. Required cofactor for the serine protease function of NS3. May have membrane-destabilizing activity and form viroporins. Functionally, displays three enzymatic activities: serine protease, NTPase and RNA helicase. NS3 serine protease, in association with NS2B, performs its autocleavage and cleaves the polyprotein at dibasic sites in the cytoplasm: C-prM, NS2A-NS2B, NS2B-NS3, NS3-NS4A, NS4A-2K and NS4B-NS5. NS3 RNA helicase binds RNA and unwinds dsRNA in the 3' to 5' direction. Its function is as follows. Regulates the ATPase activity of the NS3 helicase activity. NS4A allows NS3 helicase to conserve energy during unwinding. Plays a role in the inhibition of the host innate immune response. Interacts with host MAVS and thereby prevents the interaction between RIGI and MAVS. In turn, IFN-beta production is impaired. Interacts with host AUP1 which mediates induction of lipophagy in host cells and facilitates production of virus progeny particles. In terms of biological role, functions as a signal peptide for NS4B and is required for the interferon antagonism activity of the latter. Induces the formation of ER-derived membrane vesicles where the viral replication takes place. Inhibits interferon (IFN)-induced host STAT1 phosphorylation and nuclear translocation, thereby preventing the establishment of cellular antiviral state by blocking the IFN-alpha/beta pathway. Functionally, replicates the viral (+) and (-) RNA genome, and performs the capping of genomes in the cytoplasm. NS5 methylates viral RNA cap at guanine N-7 and ribose 2'-O positions. Besides its role in RNA genome replication, also prevents the establishment of cellular antiviral state by blocking the interferon-alpha/beta (IFN-alpha/beta) signaling pathway. Inhibits host TYK2 and STAT2 phosphorylation, thereby preventing activation of JAK-STAT signaling pathway. May reduce immune responses by preventing the recruitment of the host PAF1 complex to interferon-responsive genes. The protein is Genome polyprotein of Aedimorphus (Red guenon).